Consider the following 142-residue polypeptide: Large ribosomal subunit protein uL11 (142 aa).

It belongs to the universal ribosomal protein uL11 family. As to quaternary structure, part of the ribosomal stalk of the 50S ribosomal subunit. Interacts with L10 and the large rRNA to form the base of the stalk. L10 forms an elongated spine to which L12 dimers bind in a sequential fashion forming a multimeric L10(L12)X complex. One or more lysine residues are methylated.

Functionally, forms part of the ribosomal stalk which helps the ribosome interact with GTP-bound translation factors. This Xylella fastidiosa (strain 9a5c) protein is Large ribosomal subunit protein uL11.